The sequence spans 278 residues: Large ribosomal subunit protein uL2 (278 aa).

The disordered stretch occupies residues 222–278 (GVVMNPIDHPHGGGEGRTSGGRHPVTPWGKPTKGKKTRSNKSTNKFILISRHKRKKK).

This sequence belongs to the universal ribosomal protein uL2 family. In terms of assembly, part of the 50S ribosomal subunit. Forms a bridge to the 30S subunit in the 70S ribosome.

In terms of biological role, one of the primary rRNA binding proteins. Required for association of the 30S and 50S subunits to form the 70S ribosome, for tRNA binding and peptide bond formation. It has been suggested to have peptidyltransferase activity; this is somewhat controversial. Makes several contacts with the 16S rRNA in the 70S ribosome. This Afipia carboxidovorans (strain ATCC 49405 / DSM 1227 / KCTC 32145 / OM5) (Oligotropha carboxidovorans) protein is Large ribosomal subunit protein uL2.